The following is a 288-amino-acid chain: Energy-coupling factor transporter ATP-binding protein EcfA2 (288 aa).

In terms of domain architecture, ABC transporter spans 3 to 246; sequence ITFDHVSFTY…PAWLKANQLG (244 aa). 40–47 is an ATP binding site; sequence GHTGSGKS. E171 functions as the Proton acceptor in the catalytic mechanism.

It belongs to the ABC transporter superfamily. Energy-coupling factor EcfA family. In terms of assembly, forms a stable energy-coupling factor (ECF) transporter complex probably composed of 2 membrane-embedded substrate-binding proteins (S component), 2 ATP-binding proteins (A component) and 2 transmembrane proteins (T component). This complex interacts with a number of substrate-specific components, including FolT and ThiT for 5-formyltetrahydrofolate and thiamine respectively.

Its subcellular location is the cell membrane. Functionally, ATP-binding (A) component of a common energy-coupling factor (ECF) ABC-transporter complex. Unlike classic ABC transporters this ECF transporter provides the energy necessary to transport a number of different substrates including 5-formyltetrahydrofolate and thiamine. Expression of the complex plus FolT or ThiT in Lactococcus lactis subsp. cremoris (strain NZ9000) allows 5-formyltetrahydrofolate or thiamine uptake respectively; 5-formyltetrahydrofolate or thiamine are not taken up in the absence of FolT/ThiT or the EcfA1A2T complex. Deenergized L.lactis subsp. cremoris (treated with 2-deoxyglucose) do not take up substrate. The chain is Energy-coupling factor transporter ATP-binding protein EcfA2 from Lacticaseibacillus paracasei (strain ATCC 334 / BCRC 17002 / CCUG 31169 / CIP 107868 / KCTC 3260 / NRRL B-441) (Lactobacillus paracasei).